Here is a 243-residue protein sequence, read N- to C-terminus: R-spondin-2 (243 aa).

Residues 1–21 form the signal peptide; it reads MQFQLFSFALIILNCVDYSHC. Intrachain disulfides connect Cys40–Cys46, Cys43–Cys52, Cys55–Cys74, Cys78–Cys93, Cys96–Cys104, Cys101–Cys110, Cys113–Cys124, Cys128–Cys141, Cys145–Cys187, Cys156–Cys163, and Cys196–Cys203. Residues 90–134 form an FU repeat; it reads MNRCSRCRIENCDSCFSRDFCIKCKSGFYSLKGQCFEECPEGFAP. The TSP type-1 domain occupies 144-204; it reads GCEVGPWSEW…RCKMAIRHCP (61 aa). The N-linked (GlcNAc...) asparagine glycan is linked to Asn160. Residues 204–224 are compositionally biased toward basic residues; sequence PGGKRTTKKKDKRNKKKKKKL. Residues 204 to 243 form a disordered region; sequence PGGKRTTKKKDKRNKKKKKKLLERAQEQHSVVLATDRSSQ.

It belongs to the R-spondin family. As to quaternary structure, binds heparin.

The protein localises to the secreted. Activator of the canonical Wnt signaling pathway by acting as a ligand for lgr4-6 receptors. Upon binding to lgr4-6 (lgr4, lgr5 or lgr6), lgr4-6 associate with phosphorylated lrp6 and frizzled receptors that are activated by extracellular Wnt receptors, triggering the canonical Wnt signaling pathway to increase expression of target genes. Acts both in the canonical Wnt/beta-catenin-dependent pathway and in non-canonical Wnt signaling pathway. Activates neural markers and promotes muscle formation. Overexpression blocks activin, nodal and BMP4 signaling, suggesting that it may negatively regulate the TGF-beta pathway. During embryonic development, plays a crucial role in limb specification, amplifying the Wnt signaling pathway independently of LGR4-6 receptors, possibly by acting as a direct antagonistic ligand to RNF43 and ZNRF3, hence governing the number of limbs an embryo should form. The chain is R-spondin-2 (rspo2) from Xenopus laevis (African clawed frog).